The primary structure comprises 651 residues: BTB/POZ domain-containing protein At3g44820 (651 aa).

One can recognise a BTB domain in the interval 25–96 (SDITVVVDDV…CYGARVDITS (72 aa)). An NPH3 domain is found at 211 to 509 (DWWYEDISYL…LQVLFFEQMH (299 aa)). Residues 611 to 651 (DAKNDTVQNSVSSTPRSATADHTLPRSSRHSKHRKSFSFFG) are disordered. Over residues 615 to 627 (DTVQNSVSSTPRS) the composition is skewed to polar residues. Residues 637-651 (SSRHSKHRKSFSFFG) show a composition bias toward basic residues.

This sequence belongs to the NPH3 family.

Its pathway is protein modification; protein ubiquitination. Functionally, may act as a substrate-specific adapter of an E3 ubiquitin-protein ligase complex (CUL3-RBX1-BTB) which mediates the ubiquitination and subsequent proteasomal degradation of target proteins. This chain is BTB/POZ domain-containing protein At3g44820, found in Arabidopsis thaliana (Mouse-ear cress).